Reading from the N-terminus, the 425-residue chain is Glutamate-1-semialdehyde 2,1-aminomutase (425 aa).

Residue K265 is modified to N6-(pyridoxal phosphate)lysine.

This sequence belongs to the class-III pyridoxal-phosphate-dependent aminotransferase family. HemL subfamily. Homodimer. Requires pyridoxal 5'-phosphate as cofactor.

It localises to the cytoplasm. It carries out the reaction (S)-4-amino-5-oxopentanoate = 5-aminolevulinate. It functions in the pathway porphyrin-containing compound metabolism; protoporphyrin-IX biosynthesis; 5-aminolevulinate from L-glutamyl-tRNA(Glu): step 2/2. The chain is Glutamate-1-semialdehyde 2,1-aminomutase from Nitrosospira multiformis (strain ATCC 25196 / NCIMB 11849 / C 71).